A 602-amino-acid chain; its full sequence is FAD-binding monooxygenase hmp7 (602 aa).

FAD-binding positions include 108–111 (TWYW), 120–121 (DV), and tyrosine 126. 118–120 (QCD) lines the NADP(+) pocket. NADP(+)-binding positions include 252–258 (TGATAVQ) and 275–276 (RT).

It belongs to the FAD-binding monooxygenase family. The cofactor is FAD.

Its pathway is secondary metabolite biosynthesis. FAD-binding monooxygenase; part of the gene cluster that mediates the biosynthesis of hypothemycin, a resorcylic acid lactone (RAL) that irreversibly inhibits a subset of protein kinases with a conserved cysteine in the ATP binding site such as human ERK2. The first step is performed by both PKSs hmp3 and hmp8 and leads to the production of 7',8'-dehydrozearalenol (DHZ). The highly reducing PKS hpm8 synthesizes the reduced hexaketide (7S,11S,2E,8E)-7,11-dihydroxy-dodeca-2,8-dienoate, which is transferred downstream to the non-reducing PKS hpm3. Hpm3 then extends the reduced hexaketide to a nonaketide, after which regioselective cyclization and macrolactonization affords DHZ. The next step is the conversion of DHZ into aigialomycin C and is performed by the O-methyltransferase hmp5, the FAD-binding monooxygenase hmp7, and the cytochrome P450 monooxygenase hmp1. The wide substrate tolerance of the hmp5 and hmp7 implies that the reactions from DHZ to aigialomycin C can occur in any order. The steps from aigialomycin C to hypothemycin are less well established. The FAD-linked oxidoreductase hmp9 presumably catalyzes oxidation of the C-6' hydroxyl to a ketone. The timing of this oxidation is important, since the resulting enone functional group is a Michael acceptor that can react spontaneously with glutathione, an abundant metabolite in fungal cells. The glutathione S-transferase hmp2 catalyzes cis-trans isomerization of the 7',8' double bond with equilibrium favoring the trans isomer. The hpm6-encoded transporter might preferentially pump hypothemycin out of the cell relative to the trans isomer aigialomycin A. The cis-to-trans isomerization may be coupled with C-4' hydroxylation, since all known hypothemycin analogs containing the enone functional group also have hydroxyl groups at both C-4' and C-5'. The sequence is that of FAD-binding monooxygenase hmp7 from Hypomyces subiculosus (Nectria subiculosa).